The chain runs to 258 residues: Thymidylate synthase (258 aa).

Arg21 provides a ligand contact to dUMP. His51 provides a ligand contact to (6R)-5,10-methylene-5,6,7,8-tetrahydrofolate. Residue 121–122 (RR) participates in dUMP binding. Catalysis depends on Cys141, which acts as the Nucleophile. Residues 161–164 (RSAD), Asn172, and 202–204 (HLY) contribute to the dUMP site. Asp164 contacts (6R)-5,10-methylene-5,6,7,8-tetrahydrofolate. Ala257 is a binding site for (6R)-5,10-methylene-5,6,7,8-tetrahydrofolate.

This sequence belongs to the thymidylate synthase family. Bacterial-type ThyA subfamily. As to quaternary structure, homodimer.

Its subcellular location is the cytoplasm. The catalysed reaction is dUMP + (6R)-5,10-methylene-5,6,7,8-tetrahydrofolate = 7,8-dihydrofolate + dTMP. Its pathway is pyrimidine metabolism; dTTP biosynthesis. Its function is as follows. Catalyzes the reductive methylation of 2'-deoxyuridine-5'-monophosphate (dUMP) to 2'-deoxythymidine-5'-monophosphate (dTMP) while utilizing 5,10-methylenetetrahydrofolate (mTHF) as the methyl donor and reductant in the reaction, yielding dihydrofolate (DHF) as a by-product. This enzymatic reaction provides an intracellular de novo source of dTMP, an essential precursor for DNA biosynthesis. The sequence is that of Thymidylate synthase from Dichelobacter nodosus (strain VCS1703A).